The sequence spans 114 residues: Amphinase-4 (114 aa).

His15 acts as the Proton acceptor in catalysis. Cystine bridges form between Cys26-Cys79, Cys41-Cys85, Cys59-Cys100, and Cys97-Cys114. A glycan (N-linked (GlcNAc...) asparagine) is linked at Asn27. Substrate is bound at residue 42-46 (KPVNT). N-linked (GlcNAc...) asparagine glycans are attached at residues Asn67 and Asn91. His107 serves as the catalytic Proton donor.

Belongs to the pancreatic ribonuclease family. In terms of assembly, monomer. Post-translationally, there are at least five different forms arising from glycan heterogeneity.

Its subcellular location is the secreted. Functionally, endonuclease, hydrolyzes highly polymerized RNA, poly(U) and poly(C), and the dinucleotides CpA and UpA. Hydrolyzes rCA, rUA and rUG. Has cytotoxic activity against cultured human submaxillary gland carcinoma cells. In Lithobates pipiens (Northern leopard frog), this protein is Amphinase-4.